The chain runs to 362 residues: Thiol protease aleurain (362 aa).

Residues 1 to 22 form the signal peptide; that stretch reads MAHARVLLLALAVLATAAVAVA. The propeptide at 23–143 is activation peptide; that stretch reads SSSSFADSNP…GNHLMRDAAA (121 aa). 2 cysteine pairs are disulfide-bonded: cysteine 165–cysteine 208 and cysteine 199–cysteine 241. Cysteine 168 is an active-site residue. Asparagine 188 carries N-linked (GlcNAc...) asparagine glycosylation. Residue asparagine 257 is glycosylated (N-linked (GlcNAc...) asparagine). Residues cysteine 299 and cysteine 349 are joined by a disulfide bond. Active-site residues include histidine 308 and asparagine 328.

Belongs to the peptidase C1 family.

The protein resides in the vacuole. It catalyses the reaction Hydrolysis of proteins, acting as an aminopeptidase (notably, cleaving Arg-|-Xaa bonds) as well as an endopeptidase.. In terms of biological role, may play a role in proteolysis leading to mobilization of nitrogen during senescence and starvation. This Hordeum vulgare (Barley) protein is Thiol protease aleurain.